Reading from the N-terminus, the 81-residue chain is EC protein I/II (81 aa).

It belongs to the metallothionein superfamily. Type 15 family.

Binds 5 molecules of zinc. May have a role in Zn(2+) homeostasis during embryogenesis. This chain is EC protein I/II, found in Triticum aestivum (Wheat).